A 202-amino-acid polypeptide reads, in one-letter code: Na(+)-translocating NADH-quinone reductase subunit E (202 aa).

A run of 6 helical transmembrane segments spans residues serine 11–valine 31, leucine 41–phenylalanine 61, phenylalanine 81–valine 101, glycine 114–valine 134, leucine 144–isoleucine 164, and leucine 180–isoleucine 200.

Belongs to the NqrDE/RnfAE family. As to quaternary structure, composed of six subunits; NqrA, NqrB, NqrC, NqrD, NqrE and NqrF.

The protein localises to the cell inner membrane. The catalysed reaction is a ubiquinone + n Na(+)(in) + NADH + H(+) = a ubiquinol + n Na(+)(out) + NAD(+). In terms of biological role, NQR complex catalyzes the reduction of ubiquinone-1 to ubiquinol by two successive reactions, coupled with the transport of Na(+) ions from the cytoplasm to the periplasm. NqrA to NqrE are probably involved in the second step, the conversion of ubisemiquinone to ubiquinol. This chain is Na(+)-translocating NADH-quinone reductase subunit E, found in Psychromonas ingrahamii (strain DSM 17664 / CCUG 51855 / 37).